The chain runs to 260 residues: Triosephosphate isomerase (260 aa).

11-13 is a substrate binding site; the sequence is NWK. Residue His-103 is the Electrophile of the active site. The active-site Proton acceptor is Glu-175. Substrate-binding positions include Gly-181, Ser-220, and 241-242; that span reads GG.

It belongs to the triosephosphate isomerase family. Homodimer.

It localises to the cytoplasm. The catalysed reaction is D-glyceraldehyde 3-phosphate = dihydroxyacetone phosphate. It functions in the pathway carbohydrate biosynthesis; gluconeogenesis. The protein operates within carbohydrate degradation; glycolysis; D-glyceraldehyde 3-phosphate from glycerone phosphate: step 1/1. In terms of biological role, involved in the gluconeogenesis. Catalyzes stereospecifically the conversion of dihydroxyacetone phosphate (DHAP) to D-glyceraldehyde-3-phosphate (G3P). This Shewanella sediminis (strain HAW-EB3) protein is Triosephosphate isomerase.